Reading from the N-terminus, the 623-residue chain is V-type proton ATPase catalytic subunit A (623 aa).

Residue 252–259 participates in ATP binding; that stretch reads GAFGCGKT.

This sequence belongs to the ATPase alpha/beta chains family. V-ATPase is a heteromultimeric enzyme composed of a peripheral catalytic V1 complex (main components: subunits A, B, C, D, E, and F) attached to an integral membrane V0 proton pore complex (main component: the proteolipid protein).

The catalysed reaction is ATP + H2O + 4 H(+)(in) = ADP + phosphate + 5 H(+)(out). Catalytic subunit of the peripheral V1 complex of vacuolar ATPase. V-ATPase vacuolar ATPase is responsible for acidifying a variety of intracellular compartments in eukaryotic cells. The polypeptide is V-type proton ATPase catalytic subunit A (Beta vulgaris (Sugar beet)).